We begin with the raw amino-acid sequence, 155 residues long: SsrA-binding protein (155 aa).

Belongs to the SmpB family.

It is found in the cytoplasm. Its function is as follows. Required for rescue of stalled ribosomes mediated by trans-translation. Binds to transfer-messenger RNA (tmRNA), required for stable association of tmRNA with ribosomes. tmRNA and SmpB together mimic tRNA shape, replacing the anticodon stem-loop with SmpB. tmRNA is encoded by the ssrA gene; the 2 termini fold to resemble tRNA(Ala) and it encodes a 'tag peptide', a short internal open reading frame. During trans-translation Ala-aminoacylated tmRNA acts like a tRNA, entering the A-site of stalled ribosomes, displacing the stalled mRNA. The ribosome then switches to translate the ORF on the tmRNA; the nascent peptide is terminated with the 'tag peptide' encoded by the tmRNA and targeted for degradation. The ribosome is freed to recommence translation, which seems to be the essential function of trans-translation. This is SsrA-binding protein from Bacillus cereus (strain 03BB102).